The chain runs to 408 residues: Multifunctional CCA protein (408 aa).

Residues Gly8 and Arg11 each coordinate ATP. CTP is bound by residues Gly8 and Arg11. Residues Asp21 and Asp23 each contribute to the Mg(2+) site. ATP contacts are provided by Arg91, Arg137, and Arg140. The CTP site is built by Arg91, Arg137, and Arg140. The HD domain occupies 228 to 329 (TGVHVLSVLE…LELLQSFDVY (102 aa)).

The protein belongs to the tRNA nucleotidyltransferase/poly(A) polymerase family. Bacterial CCA-adding enzyme type 1 subfamily. In terms of assembly, monomer. Can also form homodimers and oligomers. The cofactor is Mg(2+). Requires Ni(2+) as cofactor.

It catalyses the reaction a tRNA precursor + 2 CTP + ATP = a tRNA with a 3' CCA end + 3 diphosphate. The enzyme catalyses a tRNA with a 3' CCA end + 2 CTP + ATP = a tRNA with a 3' CCACCA end + 3 diphosphate. Functionally, catalyzes the addition and repair of the essential 3'-terminal CCA sequence in tRNAs without using a nucleic acid template. Adds these three nucleotides in the order of C, C, and A to the tRNA nucleotide-73, using CTP and ATP as substrates and producing inorganic pyrophosphate. tRNA 3'-terminal CCA addition is required both for tRNA processing and repair. Also involved in tRNA surveillance by mediating tandem CCA addition to generate a CCACCA at the 3' terminus of unstable tRNAs. While stable tRNAs receive only 3'-terminal CCA, unstable tRNAs are marked with CCACCA and rapidly degraded. This Pseudomonas syringae pv. syringae (strain B728a) protein is Multifunctional CCA protein.